Consider the following 509-residue polypeptide: Angiopoietin-4 (509 aa).

An N-terminal signal peptide occupies residues methionine 1–alanine 21. 8 N-linked (GlcNAc...) asparagine glycosylation sites follow: asparagine 105, asparagine 135, asparagine 149, asparagine 167, asparagine 256, asparagine 306, asparagine 317, and asparagine 417. A coiled-coil region spans residues leucine 181 to glutamate 269. A Fibrinogen C-terminal domain is found at lysine 288–glycine 508. Cysteine 297 and cysteine 326 are oxidised to a cystine. Residues valine 416–phenylalanine 436 form a disordered region. Cysteine 450 and cysteine 463 are joined by a disulfide.

As to quaternary structure, homodimer; disulfide-linked. Interacts with TEK/TIE2. In terms of tissue distribution, widely expressed.

It is found in the secreted. In terms of biological role, binds to TEK/TIE2, modulating ANGPT1 signaling. Can induce tyrosine phosphorylation of TEK/TIE2. Promotes endothelial cell survival, migration and angiogenesis. In Mus musculus (Mouse), this protein is Angiopoietin-4 (Angpt4).